Here is a 1510-residue protein sequence, read N- to C-terminus: Cysteine-tryptophan domain-containing zinc finger protein 5 (1510 aa).

A compositionally biased stretch (polar residues) spans 174–196 (YCQRTSSENDSNHSQQLLNSGPE). 4 disordered regions span residues 174–198 (YCQR…PEQK), 449–497 (SSLD…CAKD), 555–574 (KPNY…YVLD), and 582–616 (LHTE…DHKI). Over residues 454 to 465 (GFSHKTKSDKCN) the composition is skewed to basic and acidic residues. Over residues 467-476 (QPVTTSSQLQ) the composition is skewed to polar residues. Basic and acidic residues-rich tracts occupy residues 479 to 497 (PAKK…CAKD) and 556 to 574 (PNYD…YVLD). Residues 645 to 698 (SEPVDQWVCCDKCETWRLLPYGMNSDTLPKKWRCSMQSWLPGMNNCKLSEGETT) form a CW-type zinc finger. Zn(2+) is bound by residues C654, C657, C678, and C690. Over residues 768–780 (KQKRIESSDKGEK) the composition is skewed to basic and acidic residues. 3 disordered regions span residues 768 to 893 (KQKR…RDLF), 1003 to 1050 (STAA…LDRH), and 1149 to 1194 (LPIH…VRPD). The segment covering 781–790 (STVTISSGQT) has biased composition (polar residues). Residues 874-893 (NSDRGARASDAGKSDPRDLF) show a composition bias toward basic and acidic residues. The segment covering 1003–1016 (STAATSSSSKVSSS) has biased composition (low complexity). Polar residues-rich tracts occupy residues 1026–1040 (TRTS…SPLR) and 1162–1182 (PDQN…QAKL).

In terms of tissue distribution, highly expressed in young panicles. Expressed at low levels in leaf sheaths, nodes, internodes and axillary buds.

The protein resides in the nucleus. Functionally, binds to histones H3K4me1, H3K4me2 and H3K4me3 in GST pull-down assay. May facilitate the recruitment of effectors to mediate gene expression. The chain is Cysteine-tryptophan domain-containing zinc finger protein 5 from Oryza sativa subsp. japonica (Rice).